The chain runs to 343 residues: Phenylalanine--tRNA ligase alpha subunit (343 aa).

Residue E268 coordinates Mg(2+).

Belongs to the class-II aminoacyl-tRNA synthetase family. Phe-tRNA synthetase alpha subunit type 1 subfamily. Tetramer of two alpha and two beta subunits. Requires Mg(2+) as cofactor.

Its subcellular location is the cytoplasm. It carries out the reaction tRNA(Phe) + L-phenylalanine + ATP = L-phenylalanyl-tRNA(Phe) + AMP + diphosphate + H(+). In Cupriavidus necator (strain ATCC 17699 / DSM 428 / KCTC 22496 / NCIMB 10442 / H16 / Stanier 337) (Ralstonia eutropha), this protein is Phenylalanine--tRNA ligase alpha subunit.